Reading from the N-terminus, the 215-residue chain is Pyridoxine/pyridoxamine 5'-phosphate oxidase (215 aa).

Substrate-binding positions include 9–12 (RRDY) and lysine 69. FMN-binding positions include 64–69 (RVLLLK), 79–80 (FS), lysine 86, and glutamine 108. Substrate contacts are provided by tyrosine 126, arginine 130, and serine 134. FMN-binding positions include 143-144 (QS) and tryptophan 188. A substrate-binding site is contributed by 194 to 196 (RLH). FMN is bound at residue arginine 198.

Belongs to the pyridoxamine 5'-phosphate oxidase family. In terms of assembly, homodimer. Requires FMN as cofactor.

The catalysed reaction is pyridoxamine 5'-phosphate + O2 + H2O = pyridoxal 5'-phosphate + H2O2 + NH4(+). It catalyses the reaction pyridoxine 5'-phosphate + O2 = pyridoxal 5'-phosphate + H2O2. It participates in cofactor metabolism; pyridoxal 5'-phosphate salvage; pyridoxal 5'-phosphate from pyridoxamine 5'-phosphate: step 1/1. Its pathway is cofactor metabolism; pyridoxal 5'-phosphate salvage; pyridoxal 5'-phosphate from pyridoxine 5'-phosphate: step 1/1. Catalyzes the oxidation of either pyridoxine 5'-phosphate (PNP) or pyridoxamine 5'-phosphate (PMP) into pyridoxal 5'-phosphate (PLP). The protein is Pyridoxine/pyridoxamine 5'-phosphate oxidase of Azotobacter vinelandii (strain DJ / ATCC BAA-1303).